Here is a 263-residue protein sequence, read N- to C-terminus: Ubiquitin domain-containing protein 7SL RNA2 (263 aa).

Residues 1-53 (MNVDIDTETGSSFSITIDFGETVLQIKEKIEKSQGIPVSKQILYLDGKALEDD) form the Ubiquitin-like 1 domain. A disordered region spans residues 74-93 (ADPNQSNEQTEQSKQIDDKK). Residues 76–86 (PNQSNEQTEQS) are compositionally biased toward polar residues. Positions 184-263 (FTVHVKPYQE…GDTIELIREK (80 aa)) constitute a Ubiquitin-like 2 domain.

It belongs to the ubiquitin family. Expressed in seedlings, roots, stems, rosettes and flowers (at protein level).

The protein resides in the nucleus. Functionally, controls phase transition from the vegetative to the reproductive state. Involved in the maintenance of the shoot apical meristem (SAM) thus preventing inflorescence meristem (IM) formation and subsequent inflorescence stem development during flowering. Regulates leaf and organ morphology. The sequence is that of Ubiquitin domain-containing protein 7SL RNA2 from Arabidopsis thaliana (Mouse-ear cress).